The chain runs to 1849 residues: Brefeldin A-inhibited guanine nucleotide-exchange protein 1 (1849 aa).

A DCB; DCB:DCB domain and DCB:HUS domain interaction region spans residues 2–224; the sequence is YEGKKTKNMF…QEAKQMEKER (223 aa). The span at 46–58 shows a compositional bias: basic and acidic residues; that stretch reads AETEKQSPPHGEA. Disordered stretches follow at residues 46–65, 216–248, 267–302, and 378–413; these read AETE…SSTL, EAKQ…QLRY, LHTN…DQAT, and TPIS…SPGA. The residue at position 52 (Ser52) is a Phosphoserine. The span at 267-277 shows a compositional bias: basic and acidic residues; sequence LHTNDVDKSLQ. Phosphoserine occurs at positions 286, 289, 290, 397, and 410. Over residues 394-409 the composition is skewed to polar residues; that stretch reads SVSSNDTQESGNSSGP. The HUS; DCB:HUS domain interaction stretch occupies residues 557 to 577; it reads ADAQSVVDIYVNYDCDLNAAN. One can recognise an SEC7 domain in the interval 709-840; it reads FNKKPKRGIQ…IIMLTTDLHS (132 aa). The Nuclear localization signal (NLS) motif lies at 711 to 715; that stretch reads KKPKR. At Ser1079 the chain carries Phosphoserine. The tract at residues 1543–1562 is disordered; sequence RPNSGETAPPPPSPVSEKPL. 2 positions are modified to phosphoserine: Ser1566 and Ser1569.

As to quaternary structure, homodimer. Interacts with ARFGEF2/BIG2; both proteins are probably part of the same or very similar macromolecular complexes. Interacts with FKBP2. Interacts with MYO9B. Interacts with PRKAR1A and PRKAR2A. Interacts with PPP1CC. Interacts with NCL, FBL, NUP62 and U3 small nucleolar RNA. Interacts with DPY30. Interacts with PDE3A. Interacts with KANK1. Interacts with TBC1D22A and TBC1D22B. Interacts (via N-terminus) with ARL1. Phosphorylated. In vitro phosphorylated by PKA reducing its GEF activity and dephosphorylated by phosphatase PP1. In terms of tissue distribution, expressed in placenta, lung, heart, brain, kidney and pancreas.

The protein resides in the cytoplasm. It is found in the perinuclear region. The protein localises to the golgi apparatus. Its subcellular location is the trans-Golgi network membrane. It localises to the nucleus. The protein resides in the nucleolus. It is found in the nucleus matrix. With respect to regulation, inhibited by brefeldin A. Functionally, promotes guanine-nucleotide exchange on ARF1 and ARF3. Promotes the activation of ARF1/ARF3 through replacement of GDP with GTP. Involved in vesicular trafficking. Required for the maintenance of Golgi structure; the function may be independent of its GEF activity. Required for the maturation of integrin beta-1 in the Golgi. Involved in the establishment and persistence of cell polarity during directed cell movement in wound healing. Proposed to act as A kinase-anchoring protein (AKAP) and may mediate crosstalk between Arf and PKA pathways. Inhibits GAP activity of MYO9B probably through competitive RhoA binding. The function in the nucleus remains to be determined. The protein is Brefeldin A-inhibited guanine nucleotide-exchange protein 1 (ARFGEF1) of Homo sapiens (Human).